Here is a 569-residue protein sequence, read N- to C-terminus: Proline--tRNA ligase (569 aa).

This sequence belongs to the class-II aminoacyl-tRNA synthetase family. ProS type 1 subfamily. As to quaternary structure, homodimer.

It is found in the cytoplasm. The enzyme catalyses tRNA(Pro) + L-proline + ATP = L-prolyl-tRNA(Pro) + AMP + diphosphate. In terms of biological role, catalyzes the attachment of proline to tRNA(Pro) in a two-step reaction: proline is first activated by ATP to form Pro-AMP and then transferred to the acceptor end of tRNA(Pro). As ProRS can inadvertently accommodate and process non-cognate amino acids such as alanine and cysteine, to avoid such errors it has two additional distinct editing activities against alanine. One activity is designated as 'pretransfer' editing and involves the tRNA(Pro)-independent hydrolysis of activated Ala-AMP. The other activity is designated 'posttransfer' editing and involves deacylation of mischarged Ala-tRNA(Pro). The misacylated Cys-tRNA(Pro) is not edited by ProRS. The protein is Proline--tRNA ligase of Shewanella loihica (strain ATCC BAA-1088 / PV-4).